The sequence spans 513 residues: Putative thymidine phosphorylase (513 aa).

This sequence belongs to the thymidine/pyrimidine-nucleoside phosphorylase family. Type 2 subfamily.

It carries out the reaction thymidine + phosphate = 2-deoxy-alpha-D-ribose 1-phosphate + thymine. This chain is Putative thymidine phosphorylase, found in Rhodopseudomonas palustris (strain BisA53).